Reading from the N-terminus, the 499-residue chain is MASINRPIVFFTVCLFLLCDGSLAQQLLGQSTSQWQSSRRGSPRGCRFDRLQAFEPIRSVRSQAGTTEFFDVSNELFQCTGVSVVRRVIEPRGLLLPHYTNGASLVYIIQGRGITGPTFPGCPETYQQQFQQSGQAQLTESQSQSHKFKDEHQKIHRFRQGDVIALPAGVAHWCYNDGEVPVVAIYVTDINNGANQLDPRQRDFLLAGNKRNPQAYRREVEEWSQNIFSGFSTELLSEAFGISNQVARQLQCQNDQRGEIVRVERGLSLLQPYASLQEQEQGQMQSREHYQEGGYQQSQYGSGCPNGLDETFCTMRVRQNIDNPNRADTYNPRAGRVTNLNSQNFPILNLVQMSAVKVNLYQNALLSPFWNINAHSIVYITQGRAQVQVVNNNGKTVFNGELRRGQLLIVPQHYVVVKKAQREGCAYIAFKTNPNSMVSHIAGKSSIFRALPTDVLANAYRISREEAQRLKHNRGDEFGAFTPLQYKSYQDVYNVAESS.

The first 24 residues, 1 to 24 (MASINRPIVFFTVCLFLLCDGSLA), serve as a signal peptide directing secretion. 2 disulfides stabilise this stretch: Cys-46/Cys-79 and Cys-122/Cys-313. Residues 51 to 248 (LQAFEPIRSV…AFGISNQVAR (198 aa)) form the Cupin type-1 1 domain. Residues 280–300 (EQGQMQSREHYQEGGYQQSQY) are disordered. The 150-residue stretch at 319-468 (QNIDNPNRAD…AYRISREEAQ (150 aa)) folds into the Cupin type-1 2 domain.

The protein belongs to the 11S seed storage protein (globulins) family. Hexamer; each subunit is composed of an acidic and a basic chain derived from a single precursor and linked by a disulfide bond.

Functionally, seed storage protein. This is Glutelin type-A 2 (GLUA2) from Oryza sativa subsp. japonica (Rice).